The chain runs to 1384 residues: CHD3-type chromatin-remodeling factor PICKLE (1384 aa).

Ser23 carries the post-translational modification Phosphoserine. The segment at 49 to 96 adopts a PHD-type zinc-finger fold; the sequence is ENACQACGESTNLVSCNTCTYAFHAKCLVPPLKDASVENWRCPECVSP. 2 Chromo domains span residues 98-180 and 190-249; these read NEID…NSED and TTVD…RSKD. A Helicase ATP-binding domain is found at 285 to 471; sequence RFSWSKQTHV…FMLMHFLDAG (187 aa). Position 298–305 (298–305) interacts with ATP; it reads DEMGLGKT. The short motif at 376–383 is the Nuclear localization signal element; sequence KKKKSGQI. Positions 422–425 match the DEAH box motif; it reads DEGH. The 162-residue stretch at 599–760 folds into the Helicase C-terminal domain; it reads LLDKMMVKLK…NINQEELDDI (162 aa). The span at 893–912 shows a compositional bias: acidic residues; that stretch reads AGLEDVSSDGDESYEAESTD. Disordered stretches follow at residues 893–941, 1122–1152, 1313–1344, and 1365–1384; these read AGLE…TPLM, GLQG…NNNA, SDQS…PLRG, and VDVK…MVVD. A compositionally biased stretch (polar residues) spans 1138 to 1152; it reads TNQNPGSVITGNNNA. Basic and acidic residues-rich tracts occupy residues 1316–1341 and 1367–1384; these read SKSH…ETKP and VKME…MVVD.

The protein belongs to the SNF2/RAD54 helicase family. In terms of assembly, interacts with TAF12B. As to expression, mostly expressed in tissue undergoing significant differentiation (meristems and primordia) such as young seedlings, influorescent tissue and young siliques, but not in endosperm and seed coat (at protein level). Levels decrease as organs age. Also present in trichomes.

It localises to the nucleus. Its function is as follows. Chromatin remodeling factor that represses the expression of embryonic trait genes (such as NFYB9/LEC1) upon and after seed germination and thus enables the developmental switch to post-germinative growth. Silences some MADS-box proteins such as PHE1 and PHE2. Plays a role during carpel differentiation. Regulates late processes in cytokinin signaling. The protein is CHD3-type chromatin-remodeling factor PICKLE (PKL) of Arabidopsis thaliana (Mouse-ear cress).